The primary structure comprises 281 residues: MALYCVGDIQGCDDAFERLLATIGFSPSRDTLYVLGDLVNRGPHSAAVLRRCITLGDSVRPLLGNHDLHLLAAAYGTRRPSRRDTLQDILLAPDRDEMLEWLRHQPLARRVHHGGGDLLMVHAGVLPQWTAEETLAYAGEVEAVLQSREFAGFLQQMYGNSPDLWSPELQGTDRLRVIVNALTRMRFCSPEGRMDFESTESASEAPPGLVPWFDAPGRRTLNTLIAFGHWSTLGWLDRADVLGLDTGCVWGGCLSAVRFGTTLADRERCHVECPQAQMPGA.

It belongs to the Ap4A hydrolase family.

It catalyses the reaction P(1),P(4)-bis(5'-adenosyl) tetraphosphate + H2O = 2 ADP + 2 H(+). Functionally, hydrolyzes diadenosine 5',5'''-P1,P4-tetraphosphate to yield ADP. In Acidovorax ebreus (strain TPSY) (Diaphorobacter sp. (strain TPSY)), this protein is Bis(5'-nucleosyl)-tetraphosphatase, symmetrical.